Here is a 181-residue protein sequence, read N- to C-terminus: Cytidylate kinase (181 aa).

7 to 15 contacts ATP; it reads GPPGSGTTS.

It belongs to the cytidylate kinase family. Type 2 subfamily.

It is found in the cytoplasm. The catalysed reaction is CMP + ATP = CDP + ADP. It catalyses the reaction dCMP + ATP = dCDP + ADP. The polypeptide is Cytidylate kinase (Methanoculleus marisnigri (strain ATCC 35101 / DSM 1498 / JR1)).